Consider the following 124-residue polypeptide: Probable 5-hydroxyisourate hydrolase (124 aa).

3 residues coordinate substrate: histidine 16, arginine 57, and tyrosine 121.

It belongs to the transthyretin family. 5-hydroxyisourate hydrolase subfamily. Homotetramer.

The enzyme catalyses 5-hydroxyisourate + H2O = 5-hydroxy-2-oxo-4-ureido-2,5-dihydro-1H-imidazole-5-carboxylate + H(+). In terms of biological role, catalyzes the hydrolysis of 5-hydroxyisourate (HIU) to 2-oxo-4-hydroxy-4-carboxy-5-ureidoimidazoline (OHCU). The sequence is that of Probable 5-hydroxyisourate hydrolase from Schizosaccharomyces pombe (strain 972 / ATCC 24843) (Fission yeast).